We begin with the raw amino-acid sequence, 638 residues long: 1-deoxy-D-xylulose-5-phosphate synthase (638 aa).

Thiamine diphosphate-binding positions include His79 and 120 to 122 (AHS). Asp151 serves as a coordination point for Mg(2+). Thiamine diphosphate contacts are provided by residues 152 to 153 (GA), Asn180, Tyr289, and Glu371. Position 180 (Asn180) interacts with Mg(2+).

The protein belongs to the transketolase family. DXPS subfamily. As to quaternary structure, homodimer. It depends on Mg(2+) as a cofactor. Thiamine diphosphate is required as a cofactor.

It catalyses the reaction D-glyceraldehyde 3-phosphate + pyruvate + H(+) = 1-deoxy-D-xylulose 5-phosphate + CO2. It functions in the pathway metabolic intermediate biosynthesis; 1-deoxy-D-xylulose 5-phosphate biosynthesis; 1-deoxy-D-xylulose 5-phosphate from D-glyceraldehyde 3-phosphate and pyruvate: step 1/1. Its function is as follows. Catalyzes the acyloin condensation reaction between C atoms 2 and 3 of pyruvate and glyceraldehyde 3-phosphate to yield 1-deoxy-D-xylulose-5-phosphate (DXP). The protein is 1-deoxy-D-xylulose-5-phosphate synthase of Rhizobium johnstonii (strain DSM 114642 / LMG 32736 / 3841) (Rhizobium leguminosarum bv. viciae).